Reading from the N-terminus, the 213-residue chain is Orotate phosphoribosyltransferase (213 aa).

Lysine 25 is a 5-phospho-alpha-D-ribose 1-diphosphate binding site. 33 to 34 (FF) serves as a coordination point for orotate. 5-phospho-alpha-D-ribose 1-diphosphate-binding positions include 71–72 (YK), arginine 98, lysine 99, lysine 102, histidine 104, and 124–132 (DDVITSGTA). Residues threonine 128 and arginine 156 each coordinate orotate.

The protein belongs to the purine/pyrimidine phosphoribosyltransferase family. PyrE subfamily. Homodimer. Requires Mg(2+) as cofactor.

The enzyme catalyses orotidine 5'-phosphate + diphosphate = orotate + 5-phospho-alpha-D-ribose 1-diphosphate. It participates in pyrimidine metabolism; UMP biosynthesis via de novo pathway; UMP from orotate: step 1/2. Functionally, catalyzes the transfer of a ribosyl phosphate group from 5-phosphoribose 1-diphosphate to orotate, leading to the formation of orotidine monophosphate (OMP). This Buchnera aphidicola subsp. Acyrthosiphon pisum (strain 5A) protein is Orotate phosphoribosyltransferase.